Here is a 51-residue protein sequence, read N- to C-terminus: Cyclic phosphodiesterase (51 aa).

The active-site Proton donor/acceptor is His-11. A substrate-binding site is contributed by Thr-13. His-38 functions as the Proton donor/acceptor in the catalytic mechanism. Ser-40 and Tyr-43 together coordinate substrate.

This sequence belongs to the 2H phosphoesterase superfamily. CPD1 family.

In terms of biological role, hydrolyzes ADP-ribose 1'',2''-cyclic phosphate (Appr&gt;1) that is produced during tRNA splicing into ADP-ribose 1''-phosphate (Appr-1''p). The chain is Cyclic phosphodiesterase from Triticum aestivum (Wheat).